Consider the following 1488-residue polypeptide: Chromosome partition protein MukB (1488 aa).

34-41 lines the ATP pocket; it reads GGNGAGKS. Coiled-coil stretches lie at residues 326 to 418, 444 to 472, and 509 to 602; these read LEAD…QYNQ, LDTFQAKEQEATEKLLSLEQKMSVAQTAH, and RHLA…QRAP. The flexible hinge stretch occupies residues 666–783; sequence PGGAEDQRLN…SLPIFGRAAR (118 aa). Coiled-coil stretches lie at residues 835 to 923, 977 to 1116, and 1209 to 1265; these read EAEI…AKLE, EMLS…AKAG, and VEAI…LQSV. Positions 1049–1074 are disordered; sequence ADSGAEERARQRRDELHAQLSNNRSR. Over residues 1051-1065 the composition is skewed to basic and acidic residues; sequence SGAEERARQRRDELH.

This sequence belongs to the SMC family. MukB subfamily. In terms of assembly, homodimerization via its hinge domain. Binds to DNA via its C-terminal region. Interacts, and probably forms a ternary complex, with MukE and MukF via its C-terminal region. The complex formation is stimulated by calcium or magnesium. Interacts with tubulin-related protein FtsZ.

The protein resides in the cytoplasm. Its subcellular location is the nucleoid. Its function is as follows. Plays a central role in chromosome condensation, segregation and cell cycle progression. Functions as a homodimer, which is essential for chromosome partition. Involved in negative DNA supercoiling in vivo, and by this means organize and compact chromosomes. May achieve or facilitate chromosome segregation by condensation DNA from both sides of a centrally located replisome during cell division. This chain is Chromosome partition protein MukB, found in Salmonella schwarzengrund (strain CVM19633).